We begin with the raw amino-acid sequence, 769 residues long: Phenylalanine--tRNA ligase beta subunit (769 aa).

The 102-residue stretch at 40-141 folds into the tRNA-binding domain; sequence GKLLTIARVA…GEPIPGCEPD (102 aa). One can recognise a B5 domain in the interval 389 to 467; sequence PAPPPIELPL…RMIGYDSIAP (79 aa). Residues Asp-445, Asp-451, Glu-454, and Glu-455 each coordinate Mg(2+). The FDX-ACB domain occupies 676-768; that stretch reads RRYPSSAFDL…GMRAKGYELR (93 aa).

Belongs to the phenylalanyl-tRNA synthetase beta subunit family. Type 1 subfamily. Tetramer of two alpha and two beta subunits. Mg(2+) serves as cofactor.

The protein resides in the cytoplasm. The catalysed reaction is tRNA(Phe) + L-phenylalanine + ATP = L-phenylalanyl-tRNA(Phe) + AMP + diphosphate + H(+). The chain is Phenylalanine--tRNA ligase beta subunit from Solibacter usitatus (strain Ellin6076).